Reading from the N-terminus, the 431-residue chain is Levansucrase LscB (431 aa).

The sucrose site is built by Trp61, Asp62, Ala148, Arg218, and Asp219. Asp62 functions as the Nucleophile in the catalytic mechanism. Glu303 acts as the Proton donor/acceptor in catalysis.

Belongs to the glycosyl hydrolase 68 family.

It localises to the secreted. It carries out the reaction [6)-beta-D-fructofuranosyl-(2-&gt;](n) alpha-D-glucopyranoside + sucrose = [6)-beta-D-fructofuranosyl-(2-&gt;](n+1) alpha-D-glucopyranoside + D-glucose. Its function is as follows. Catalyzes the synthesis of levan, a fructose polymer, by transferring the fructosyl moiety from sucrose to a growing acceptor molecule. This chain is Levansucrase LscB, found in Pseudomonas savastanoi pv. glycinea (Pseudomonas syringae pv. glycinea).